A 325-amino-acid chain; its full sequence is VSG expression site-associated protein 117A (325 aa).

An N-terminal signal peptide occupies residues 1–23 (MKVTIVELVVWLFSVNFFVVVAE). N-linked (GlcNAc...) asparagine glycosylation is found at Asn72, Asn290, and Asn313.

Its function is as follows. Not known but may be related to activation of the variant surface glycoprotein genes. In Trypanosoma brucei brucei, this protein is VSG expression site-associated protein 117A.